The sequence spans 87 residues: MKTKLNELLEFPTPFTYKVMGQALPELVDQVVEVVQRHAPGDYSPSVKPSSKGNYHSVSITINATHIEQVETLYEELGNIDIVRMVL.

This sequence belongs to the UPF0250 family.

The polypeptide is UPF0250 protein KPN78578_06520 (Klebsiella pneumoniae subsp. pneumoniae (strain ATCC 700721 / MGH 78578)).